Reading from the N-terminus, the 234-residue chain is 2,3-bisphosphoglycerate-dependent phosphoglycerate mutase (234 aa).

Substrate-binding positions include 10–17, 23–24, arginine 62, 89–92, lysine 100, 116–117, and 186–187; these read RHGSSIWN, TG, ERHY, RR, and GN. The Tele-phosphohistidine intermediate role is filled by histidine 11. The active-site Proton donor/acceptor is glutamate 89.

The protein belongs to the phosphoglycerate mutase family. BPG-dependent PGAM subfamily. In terms of assembly, homodimer.

The enzyme catalyses (2R)-2-phosphoglycerate = (2R)-3-phosphoglycerate. The protein operates within carbohydrate degradation; glycolysis; pyruvate from D-glyceraldehyde 3-phosphate: step 3/5. Its function is as follows. Catalyzes the interconversion of 2-phosphoglycerate and 3-phosphoglycerate. The protein is 2,3-bisphosphoglycerate-dependent phosphoglycerate mutase of Wigglesworthia glossinidia brevipalpis.